The following is a 34-amino-acid chain: Mytilin-A (34 aa).

Cystine bridges form between Cys2–Cys27, Cys6–Cys29, Cys10–Cys31, and Cys15–Cys34.

The protein localises to the secreted. Has antibacterial activity against A.viridans, B.megaterium, M.luteus, E.faecalis, S.aureus and E.coli. It is active against the marine species A.carrageenovora, P.alginovora and C.drobachiensis. The chain is Mytilin-A from Mytilus edulis (Blue mussel).